The following is a 194-amino-acid chain: Probable thymidylate kinase (194 aa).

ATP is bound at residue 8–15 (GIDGSGKT).

The protein belongs to the thymidylate kinase family.

The enzyme catalyses dTMP + ATP = dTDP + ADP. In Sulfolobus acidocaldarius (strain ATCC 33909 / DSM 639 / JCM 8929 / NBRC 15157 / NCIMB 11770), this protein is Probable thymidylate kinase.